The chain runs to 148 residues: UPF0260 protein YcgN (148 aa).

Belongs to the UPF0260 family.

In Salmonella paratyphi A (strain AKU_12601), this protein is UPF0260 protein YcgN.